The chain runs to 1355 residues: Probable aldehyde oxidase 2 (1355 aa).

Residues 9–96 (RPVVVTVNGE…HCAVTTSEGI (88 aa)) form the 2Fe-2S ferredoxin-type domain. [2Fe-2S] cluster contacts are provided by C48, C53, C56, and C78. The region spanning 244–422 (VAVTGDGWFH…VSISIPDWGS (179 aa)) is the FAD-binding PCMH-type domain. The segment at 544–577 (PENANVPNGSCTNGTANGSANSSPEKHSNVDSSD) is disordered. Positions 548-566 (NVPNGSCTNGTANGSANSS) are enriched in polar residues.

This sequence belongs to the xanthine dehydrogenase family. Aldehyde oxidases (AO) are homodimers and heterodimers of AO subunits. It depends on [2Fe-2S] cluster as a cofactor. FAD serves as cofactor. Requires Mo-molybdopterin as cofactor.

It catalyses the reaction an aldehyde + O2 + H2O = a carboxylate + H2O2 + H(+). The protein is Probable aldehyde oxidase 2 of Oryza sativa subsp. japonica (Rice).